A 316-amino-acid chain; its full sequence is Protein lifeguard 2 (316 aa).

The segment at Met1 to Pro53 is disordered. The next 3 helical transmembrane spans lie at Val106–Phe126, Pro138–Cys158, and Phe165–Met185. The N-linked (GlcNAc...) asparagine glycan is linked to Asn191. 4 consecutive transmembrane segments (helical) span residues Ser194–Phe214, Gly225–Leu245, Val250–Ala270, and Ile290–Leu310.

Belongs to the BI1 family. LFG subfamily. As to quaternary structure, interacts with FAS/TNFRSF6 and BAX. As to expression, highly expressed in breast carcinoma tissues. Enhanced expression correlates with the grade of the tumor (grade II/grade III) in primary breast tumors (at protein level). Widely expressed. Expressed at high levels in the brain especially in the hippocampus.

It localises to the cell membrane. Its subcellular location is the membrane raft. The protein localises to the postsynaptic cell membrane. Functionally, antiapoptotic protein which protects cells uniquely from Fas-induced apoptosis. Regulates Fas-mediated apoptosis in neurons by interfering with caspase-8 activation. May play a role in cerebellar development by affecting cerebellar size, internal granular layer (IGL) thickness, and Purkinje cell (PC) development. The polypeptide is Protein lifeguard 2 (FAIM2) (Homo sapiens (Human)).